A 105-amino-acid chain; its full sequence is Large ribosomal subunit protein uL24 (105 aa).

This sequence belongs to the universal ribosomal protein uL24 family. As to quaternary structure, part of the 50S ribosomal subunit.

Functionally, one of two assembly initiator proteins, it binds directly to the 5'-end of the 23S rRNA, where it nucleates assembly of the 50S subunit. In terms of biological role, one of the proteins that surrounds the polypeptide exit tunnel on the outside of the subunit. The protein is Large ribosomal subunit protein uL24 of Anaplasma marginale (strain St. Maries).